Reading from the N-terminus, the 464-residue chain is ATP synthase subunit beta 2 (464 aa).

An ATP-binding site is contributed by 147–154 (GGAGVGKT).

The protein belongs to the ATPase alpha/beta chains family. F-type ATPases have 2 components, CF(1) - the catalytic core - and CF(0) - the membrane proton channel. CF(1) has five subunits: alpha(3), beta(3), gamma(1), delta(1), epsilon(1). CF(0) has four main subunits: a(1), b(1), b'(1) and c(9-12).

It is found in the cell inner membrane. It catalyses the reaction ATP + H2O + 4 H(+)(in) = ADP + phosphate + 5 H(+)(out). In terms of biological role, produces ATP from ADP in the presence of a proton gradient across the membrane. The catalytic sites are hosted primarily by the beta subunits. This is ATP synthase subunit beta 2 from Cereibacter sphaeroides (strain ATCC 17029 / ATH 2.4.9) (Rhodobacter sphaeroides).